We begin with the raw amino-acid sequence, 514 residues long: Maturase K (514 aa).

This sequence belongs to the intron maturase 2 family. MatK subfamily.

The protein resides in the plastid. Its subcellular location is the chloroplast. Usually encoded in the trnK tRNA gene intron. Probably assists in splicing its own and other chloroplast group II introns. The protein is Maturase K of Acer palmatum (Japanese maple).